The following is a 328-amino-acid chain: Glucan endo-1,3-beta-glucosidase, basic isoform 3 (328 aa).

Glutamate 85 functions as the Proton donor in the catalytic mechanism. The active-site Nucleophile is the glutamate 230. Positions 306–328 are cleaved as a propeptide — removed in mature form; that stretch reads VSERVWDISAETNSTTSSLISEM. Asparagine 318 carries an N-linked (GlcNAc...) asparagine glycan.

Belongs to the glycosyl hydrolase 17 family.

It is found in the vacuole. The enzyme catalyses Hydrolysis of (1-&gt;3)-beta-D-glucosidic linkages in (1-&gt;3)-beta-D-glucans.. In terms of biological role, is thought to be an important plant defense-related product against fungal pathogens. This is Glucan endo-1,3-beta-glucosidase, basic isoform 3 (GLUB3) from Solanum tuberosum (Potato).